The chain runs to 82 residues: ATP synthase subunit c (82 aa).

2 helical membrane passes run 18–38 (LGEA…IGKI) and 61–81 (IIAA…CGFL).

The protein belongs to the ATPase C chain family. F-type ATPases have 2 components, F(1) - the catalytic core - and F(0) - the membrane proton channel. F(1) has five subunits: alpha(3), beta(3), gamma(1), delta(1), epsilon(1). F(0) has three main subunits: a(1), b(2) and c(10-14). The alpha and beta chains form an alternating ring which encloses part of the gamma chain. F(1) is attached to F(0) by a central stalk formed by the gamma and epsilon chains, while a peripheral stalk is formed by the delta and b chains.

Its subcellular location is the cell inner membrane. In terms of biological role, f(1)F(0) ATP synthase produces ATP from ADP in the presence of a proton or sodium gradient. F-type ATPases consist of two structural domains, F(1) containing the extramembraneous catalytic core and F(0) containing the membrane proton channel, linked together by a central stalk and a peripheral stalk. During catalysis, ATP synthesis in the catalytic domain of F(1) is coupled via a rotary mechanism of the central stalk subunits to proton translocation. Functionally, key component of the F(0) channel; it plays a direct role in translocation across the membrane. A homomeric c-ring of between 10-14 subunits forms the central stalk rotor element with the F(1) delta and epsilon subunits. In Azobacteroides pseudotrichonymphae genomovar. CFP2, this protein is ATP synthase subunit c.